A 426-amino-acid polypeptide reads, in one-letter code: 3-phosphoshikimate 1-carboxyvinyltransferase (426 aa).

Residues Lys22, Ser23, and Arg27 each coordinate 3-phosphoshikimate. Lys22 is a phosphoenolpyruvate binding site. 2 residues coordinate phosphoenolpyruvate: Gly96 and Arg124. 3-phosphoshikimate is bound by residues Ser170, Ser171, Gln172, Ser198, Asp314, Asn337, and Lys341. Position 172 (Gln172) interacts with phosphoenolpyruvate. Catalysis depends on Asp314, which acts as the Proton acceptor. Arg345, Arg387, and Lys412 together coordinate phosphoenolpyruvate.

This sequence belongs to the EPSP synthase family. As to quaternary structure, monomer.

It localises to the cytoplasm. The catalysed reaction is 3-phosphoshikimate + phosphoenolpyruvate = 5-O-(1-carboxyvinyl)-3-phosphoshikimate + phosphate. It participates in metabolic intermediate biosynthesis; chorismate biosynthesis; chorismate from D-erythrose 4-phosphate and phosphoenolpyruvate: step 6/7. Functionally, catalyzes the transfer of the enolpyruvyl moiety of phosphoenolpyruvate (PEP) to the 5-hydroxyl of shikimate-3-phosphate (S3P) to produce enolpyruvyl shikimate-3-phosphate and inorganic phosphate. This Vibrio cholerae serotype O1 (strain ATCC 39541 / Classical Ogawa 395 / O395) protein is 3-phosphoshikimate 1-carboxyvinyltransferase.